Here is a 170-residue protein sequence, read N- to C-terminus: Small ribosomal subunit protein uS3mA (170 aa).

The N-terminal 30 residues, 1 to 30 (MAAPVMSALGRLQGLIRTERSLLTHVQSRC), are a transit peptide targeting the mitochondrion.

It belongs to the universal ribosomal protein uS3 family. As to quaternary structure, component of the mitochondrial ribosome small subunit (28S) which comprises a 12S rRNA and about 30 distinct proteins.

It localises to the mitochondrion. The sequence is that of Small ribosomal subunit protein uS3mA (mrps24-a) from Xenopus laevis (African clawed frog).